Consider the following 345-residue polypeptide: Sorting nexin-15 (345 aa).

The PX domain maps to 1-130 (MSRQAKDDFL…EFFRGGEVTR (130 aa)). Omega-N-methylarginine is present on Arg105. A disordered region spans residues 133 to 163 (EVSGDLHILPPPLIPTPPPDEPRVQPHETWL). Residues 141-151 (LPPPLIPTPPP) are compositionally biased toward pro residues. Phosphoserine occurs at positions 208 and 234. The tract at residues 226 to 274 (SKEEGAGPSPTHIGELAALEAGSGRPDQEPWEPGGQAEEDDEEGEPAPA) is disordered. One can recognise an MIT domain in the interval 272 to 345 (APAYLSQATE…AEEILHLHLS (74 aa)).

The protein belongs to the sorting nexin family.

Functionally, may be involved in several stages of intracellular trafficking. Overexpression of SNX15 disrupts the normal trafficking of proteins from the plasma membrane to recycling endosomes or the TGN. This chain is Sorting nexin-15 (SNX15), found in Bos taurus (Bovine).